The primary structure comprises 400 residues: MTSYSYRQSSATSSFGGLGGGSVRFGPGVAFRAPSIHGGSGGRGVSVSSARFVSSSSSGAYGGGYGGVLTASDGLLAGNEKLTMQNLNDRLASYLDKVRALEAANGELEVKIRDWYQKQGPGPSRDYSHYYTTIQDLRDKILGATIENSRIVLQIDNARLAADDFRTKFETEQALRMSVEADINGLRRVLDELTLARTDLEMQIEGLKEELAYLKKNHEEEISTLRGQVGGQVSVEVDSAPGTDLAKILSDMRSQYEVMAEQNRKDAEAWFTSRTEELNREVAGHTEQLQMSRSEVTDLRRTLQGLEIELQSQLSMKAALEDTLAETEARFGAQLAHIQALISGIEAQLGDVRADSERQNQEYQRLMDIKSRLEQEIATYRSLLEGQEDHYNNLSASKVL.

Positions 1 to 79 (MTSYSYRQSS…TASDGLLAGN (79 aa)) are head. The residue at position 7 (R7) is an Omega-N-methylarginine. 2 positions are modified to phosphoserine: S14 and S22. R24 carries the asymmetric dimethylarginine; alternate modification. The residue at position 24 (R24) is an Omega-N-methylarginine; alternate. Residue R32 is modified to Omega-N-methylarginine. Residues S35 and S40 each carry the phosphoserine modification. An omega-N-methylarginine mark is found at R43 and R51. 2 positions are modified to phosphoserine: S57 and S72. A coil 1A region spans residues 80-115 (EKLTMQNLNDRLASYLDKVRALEAANGELEVKIRDW). An IF rod domain is found at 80–391 (EKLTMQNLND…SLLEGQEDHY (312 aa)). Residues 116–133 (YQKQGPGPSRDYSHYYTT) are linker 1. Residues 134-225 (IQDLRDKILG…KNHEEEISTL (92 aa)) form a coil 1B region. The interval 226–248 (RGQVGGQVSVEVDSAPGTDLAKI) is linker 12. The interval 244-390 (DLAKILSDMR…RSLLEGQEDH (147 aa)) is necessary for interaction with PNN. The tract at residues 249–387 (LSDMRSQYEV…ATYRSLLEGQ (139 aa)) is coil 2. Phosphothreonine is present on T323. The interval 388 to 400 (EDHYNNLSASKVL) is rod-like helical tail. Residue Y391 is modified to Phosphotyrosine. A phosphoserine mark is found at S395 and S397.

This sequence belongs to the intermediate filament family. As to quaternary structure, heterotetramer of two type I and two type II keratins. Interacts with PNN and the actin-binding domain of DMD. Interacts with HCV core protein. In terms of assembly, (Microbial infection) Interacts with hepatitis C virus/HCV core protein. In terms of tissue distribution, expressed in a defined zone of basal keratinocytes in the deep outer root sheath of hair follicles. Also observed in sweat gland and mammary gland ductal and secretory cells, bile ducts, gastrointestinal tract, bladder urothelium, oral epithelia, esophagus, ectocervical epithelium (at protein level). Expressed in epidermal basal cells, in nipple epidermis and a defined region of the hair follicle. Also seen in a subset of vascular wall cells in both the veins and artery of human umbilical cord, and in umbilical cord vascular smooth muscle. Observed in muscle fibers accumulating in the costameres of myoplasm at the sarcolemma in structures that contain dystrophin and spectrin.

Functionally, involved in the organization of myofibers. Together with KRT8, helps to link the contractile apparatus to dystrophin at the costameres of striated muscle. The protein is Keratin, type I cytoskeletal 19 (KRT19) of Homo sapiens (Human).